Consider the following 194-residue polypeptide: Fe/S biogenesis protein NfuA (194 aa).

[4Fe-4S] cluster contacts are provided by Cys151 and Cys154.

The protein belongs to the NfuA family. Homodimer. It depends on [4Fe-4S] cluster as a cofactor.

In terms of biological role, involved in iron-sulfur cluster biogenesis. Binds a 4Fe-4S cluster, can transfer this cluster to apoproteins, and thereby intervenes in the maturation of Fe/S proteins. Could also act as a scaffold/chaperone for damaged Fe/S proteins. This is Fe/S biogenesis protein NfuA from Pasteurella multocida (strain Pm70).